A 371-amino-acid polypeptide reads, in one-letter code: GTPase Obg (371 aa).

The region spanning 1-159 is the Obg domain; it reads MKFVDEAYID…KNLKLELKVL (159 aa). An OBG-type G domain is found at 160–334; it reads ADVGLLGMPN…LIRTIYKHVH (175 aa). GTP contacts are provided by residues 166-173, 191-195, 213-216, 284-287, and 315-317; these read GMPNAGKS, FTTLH, DIPG, NKLD, and SAL. Residues Ser173 and Thr193 each coordinate Mg(2+).

Belongs to the TRAFAC class OBG-HflX-like GTPase superfamily. OBG GTPase family. In terms of assembly, monomer. Mg(2+) is required as a cofactor.

The protein localises to the cytoplasm. Functionally, an essential GTPase which binds GTP, GDP and possibly (p)ppGpp with moderate affinity, with high nucleotide exchange rates and a fairly low GTP hydrolysis rate. Plays a role in control of the cell cycle, stress response, ribosome biogenesis and in those bacteria that undergo differentiation, in morphogenesis control. The protein is GTPase Obg of Delftia acidovorans (strain DSM 14801 / SPH-1).